The following is an 899-amino-acid chain: CNK3/IPCEF1 fusion protein (899 aa).

Residues Trp-7–Leu-72 enclose the SAM domain. A CRIC domain is found at Asn-80–Ala-174. The 83-residue stretch at Glu-211–Pro-293 folds into the PDZ domain. 2 disordered regions span residues Trp-309–Leu-334 and Pro-347–Gln-390. Residues Thr-332–Ala-457 form the DUF1170 domain. Ser-383 is modified (phosphoserine). One can recognise a PH domain in the interval His-503 to Ile-602. Disordered stretches follow at residues Glu-605–Val-687, Leu-735–Ser-770, and Gln-868–Ile-899. Residues Cys-613 to Ile-624 are compositionally biased toward acidic residues. The span at Ala-634 to Leu-662 shows a compositional bias: low complexity. Polar residues predominate over residues Glu-663–Leu-676. Residues Leu-735–Ser-745 show a composition bias toward low complexity. A compositionally biased stretch (basic and acidic residues) spans Ile-761–Ser-770. Residues Lys-851–Ile-899 are required for interaction with CYTH2. Phosphoserine is present on Ser-873. Polar residues predominate over residues Ser-889–Ile-899.

Belongs to the CNKSR family.

Required for hepatocyte growth factor (HGF)-dependent activation of Arf6 and HGF-stimulated cell migration. The polypeptide is CNK3/IPCEF1 fusion protein (CNK3/IPCEF1) (Homo sapiens (Human)).